A 60-amino-acid chain; its full sequence is Large ribosomal subunit protein bL32 (60 aa).

Positions 1–23 (MAVPRNRHSNARKNIRRSHHAKK) are disordered.

The protein belongs to the bacterial ribosomal protein bL32 family.

The chain is Large ribosomal subunit protein bL32 from Chlamydia caviae (strain ATCC VR-813 / DSM 19441 / 03DC25 / GPIC) (Chlamydophila caviae).